A 513-amino-acid polypeptide reads, in one-letter code: 2,3-bisphosphoglycerate-independent phosphoglycerate mutase (513 aa).

Mn(2+) contacts are provided by D15 and S65. The active-site Phosphoserine intermediate is S65. Substrate is bound by residues H126, 156–157 (RD), R188, R194, 263–266 (RADR), and K337. D402, H406, D443, H444, and H461 together coordinate Mn(2+).

Belongs to the BPG-independent phosphoglycerate mutase family. Monomer. Requires Mn(2+) as cofactor.

It carries out the reaction (2R)-2-phosphoglycerate = (2R)-3-phosphoglycerate. The protein operates within carbohydrate degradation; glycolysis; pyruvate from D-glyceraldehyde 3-phosphate: step 3/5. In terms of biological role, catalyzes the interconversion of 2-phosphoglycerate and 3-phosphoglycerate. This Moorella thermoacetica (strain ATCC 39073 / JCM 9320) protein is 2,3-bisphosphoglycerate-independent phosphoglycerate mutase.